Consider the following 368-residue polypeptide: Phosphoserine aminotransferase (368 aa).

Arg44 serves as a coordination point for L-glutamate. Residues 78–79 (AT), Trp104, Thr157, Asp179, and Gln202 contribute to the pyridoxal 5'-phosphate site. Lys203 carries the N6-(pyridoxal phosphate)lysine modification. A pyridoxal 5'-phosphate-binding site is contributed by 244 to 245 (NT).

Belongs to the class-V pyridoxal-phosphate-dependent aminotransferase family. SerC subfamily. As to quaternary structure, homodimer. It depends on pyridoxal 5'-phosphate as a cofactor.

Its subcellular location is the cytoplasm. It catalyses the reaction O-phospho-L-serine + 2-oxoglutarate = 3-phosphooxypyruvate + L-glutamate. The catalysed reaction is 4-(phosphooxy)-L-threonine + 2-oxoglutarate = (R)-3-hydroxy-2-oxo-4-phosphooxybutanoate + L-glutamate. It functions in the pathway amino-acid biosynthesis; L-serine biosynthesis; L-serine from 3-phospho-D-glycerate: step 2/3. The protein operates within cofactor biosynthesis; pyridoxine 5'-phosphate biosynthesis; pyridoxine 5'-phosphate from D-erythrose 4-phosphate: step 3/5. Catalyzes the reversible conversion of 3-phosphohydroxypyruvate to phosphoserine and of 3-hydroxy-2-oxo-4-phosphonooxybutanoate to phosphohydroxythreonine. This chain is Phosphoserine aminotransferase, found in Neisseria meningitidis serogroup C / serotype 2a (strain ATCC 700532 / DSM 15464 / FAM18).